The chain runs to 308 residues: Olfactory receptor 4N5 (308 aa).

At Met-1–Leu-25 the chain is on the extracellular side. Residue Asn-5 is glycosylated (N-linked (GlcNAc...) asparagine). A helical membrane pass occupies residues Leu-26–Ile-49. Residues Lys-50–Ala-57 are Cytoplasmic-facing. Residues Pro-58–Pro-79 form a helical membrane-spanning segment. Residues Arg-80 to Gln-100 are Extracellular-facing. The cysteines at positions 97 and 189 are disulfide-linked. The helical transmembrane segment at Leu-101–Phe-120 threads the bilayer. Residues Asp-121–Arg-139 are Cytoplasmic-facing. The chain crosses the membrane as a helical span at residues Ala-140 to Val-158. The Extracellular segment spans residues Gln-159–Val-195. A helical membrane pass occupies residues Glu-196–Ala-219. The Cytoplasmic segment spans residues Val-220–Lys-235. A helical membrane pass occupies residues Ala-236 to Tyr-258. Residues Thr-259–Lys-269 lie on the Extracellular side of the membrane. Residues Val-270–Leu-289 traverse the membrane as a helical segment. The Cytoplasmic portion of the chain corresponds to Arg-290–Cys-308.

The protein belongs to the G-protein coupled receptor 1 family.

It is found in the cell membrane. Its function is as follows. Odorant receptor. The chain is Olfactory receptor 4N5 (OR4N5) from Homo sapiens (Human).